Consider the following 85-residue polypeptide: Acyl carrier protein (85 aa).

One can recognise a Carrier domain in the interval 4–79 (DELFEKVKEI…NAVNLLSEKL (76 aa)). Position 39 is an O-(pantetheine 4'-phosphoryl)serine (Ser-39).

Belongs to the acyl carrier protein (ACP) family. In terms of processing, 4'-phosphopantetheine is transferred from CoA to a specific serine of apo-ACP by AcpS. This modification is essential for activity because fatty acids are bound in thioester linkage to the sulfhydryl of the prosthetic group.

The protein localises to the cytoplasm. It functions in the pathway lipid metabolism; fatty acid biosynthesis. In terms of biological role, carrier of the growing fatty acid chain in fatty acid biosynthesis. The sequence is that of Acyl carrier protein from Petrotoga mobilis (strain DSM 10674 / SJ95).